Consider the following 665-residue polypeptide: Lamin-A (665 aa).

The residue at position 1 (M1) is an N-acetylmethionine. The interval 1–29 (METPGQKRATRSTHTPLSPTRITRLQEKE) is head. Position 18 is a phosphoserine (S18). Residues 27–383 (EKEDLQGLND…KLLEGEEERL (357 aa)) form the IF rod domain. Residues 30–66 (DLQGLNDRLAVYIDKVRSLELENARLRLRITESEDVI) form a coil 1A region. Positions 67-76 (SREVTGIKSA) are linker 1. Residues 77–214 (YETELADARK…SIYNEEMRET (138 aa)) are coil 1B. The tract at residues 215–238 (KRRHETRLVEVDNGRQREFESKLA) is linker 2. Residues 239–383 (DALHELRAQH…KLLEGEEERL (145 aa)) are coil 2. Disordered regions lie at residues 381–441 (ERLR…SVEE), 550–581 (DDED…GEYN), and 602–641 (ASQG…LGES). The tail stretch occupies residues 384-664 (RLSPSPNTQK…AQVAPQNCSI (281 aa)). S388 carries the post-translational modification Phosphoserine. The segment covering 399–411 (IASHSGAHISSSA) has biased composition (low complexity). A Nuclear localization signal motif is present at residues 413-418 (KRRRLE). Residues 425-542 (SSFTQHARTT…EEVAMRKLVR (118 aa)) form the LTD domain. Over residues 427–436 (FTQHARTTGK) the composition is skewed to polar residues. The span at 605-630 (GSGLVTGSSGSSSSSVTLTRTYRSTG) shows a compositional bias: low complexity. Cysteine methyl ester is present on C662. C662 is lipidated: S-farnesyl cysteine. Positions 663–665 (SIM) are cleaved as a propeptide — removed in mature form.

This sequence belongs to the intermediate filament family. Homodimer. Lamin dimers then assemble into dimeric head-to-tail polymers. Ultimately, two head-to-tail polymers assemble laterally into a protofilament with a uniformly shaped rod of 3.5 nm in diameter. Post-translationally, phosphorylation plays a key role in lamin organization, subcellular localization and nuclear envelope disintegration. Phosphorylation by CDK1 at Ser-18 at the onset of mitosis drives lamin disassembly and nuclear envelope breakdown.

The protein resides in the nucleus lamina. It localises to the nucleus envelope. It is found in the nucleus. Its subcellular location is the nucleoplasm. The protein localises to the nucleus matrix. In terms of biological role, lamins are intermediate filament proteins that assemble into a filamentous meshwork, and which constitute the major components of the nuclear lamina, a fibrous layer on the nucleoplasmic side of the inner nuclear membrane. Lamins provide a framework for the nuclear envelope, bridging the nuclear envelope and chromatin, thereby playing an important role in nuclear assembly, chromatin organization, nuclear membrane and telomere dynamics. The structural integrity of the lamina is strictly controlled by the cell cycle, as seen by the disintegration and formation of the nuclear envelope in prophase and telophase, respectively. In Xenopus laevis (African clawed frog), this protein is Lamin-A (lmna).